Here is a 311-residue protein sequence, read N- to C-terminus: Acetaldehyde dehydrogenase 2 (311 aa).

An NAD(+)-binding site is contributed by 11–14; it reads SGNI. Residue Cys-131 is the Acyl-thioester intermediate of the active site. Residues 162–170 and Asn-289 each bind NAD(+); that span reads SAGPGTRAN.

It belongs to the acetaldehyde dehydrogenase family.

The catalysed reaction is acetaldehyde + NAD(+) + CoA = acetyl-CoA + NADH + H(+). The sequence is that of Acetaldehyde dehydrogenase 2 (mhpF) from Azotobacter vinelandii (strain DJ / ATCC BAA-1303).